Consider the following 842-residue polypeptide: uncharacterized protein (842 aa).

2 disordered regions span residues M1–E20 and N142–S209. The uDENN FNIP1/2-type domain occupies T35–L422. Residues A183–S209 are compositionally biased toward polar residues. The region spanning A430 to E772 is the cDENN FNIP1/2-type domain. Phosphoserine occurs at positions 573 and 590. Positions Y777–C842 constitute a dDENN FNIP1/2-type domain.

The protein resides in the cytoplasm. This is an uncharacterized protein from Schizosaccharomyces pombe (strain 972 / ATCC 24843) (Fission yeast).